The chain runs to 389 residues: Alpha carbonic anhydrase 8 (389 aa).

A signal peptide spans 1-22; that stretch reads MKISSLGWVLVLIFISITIVSS. The segment at 21–153 is disordered; it reads SSAPAPKPPK…TKGNKGPAKW (133 aa). The segment covering 25–129 has biased composition (pro residues); it reads APKPPKPKPA…PKPKPAPKPA (105 aa). The 237-residue stretch at 138-374 folds into the Alpha-carbonic anhydrase domain; that stretch reads TEFSYETKGN…VNKRKVYLYK (237 aa). The cysteines at positions 163 and 324 are disulfide-linked. N196 carries N-linked (GlcNAc...) asparagine glycosylation. The Proton acceptor role is filled by H204. Zn(2+) is bound by residues H232, H234, and H251. 320–321 is a binding site for substrate; that stretch reads TA. N-linked (GlcNAc...) asparagine glycosylation occurs at N385.

It belongs to the alpha-class carbonic anhydrase family. Zn(2+) serves as cofactor. Post-translationally, N-glycosylated.

It localises to the plastid. The protein localises to the chloroplast stroma. The catalysed reaction is hydrogencarbonate + H(+) = CO2 + H2O. In terms of biological role, reversible hydration of carbon dioxide. The polypeptide is Alpha carbonic anhydrase 8 (ACA8) (Arabidopsis thaliana (Mouse-ear cress)).